The primary structure comprises 281 residues: Aldo-keto reductase MAP_3007 (281 aa).

Tyrosine 56 functions as the Proton donor in the catalytic mechanism. Residues leucine 196, isoleucine 234, arginine 236, serine 237, alanine 238, serine 245, and arginine 272 each contribute to the NADPH site.

The protein belongs to the aldo/keto reductase family.

This is Aldo-keto reductase MAP_3007 from Mycolicibacterium paratuberculosis (strain ATCC BAA-968 / K-10) (Mycobacterium paratuberculosis).